A 219-amino-acid chain; its full sequence is Vacuolar protein sorting-associated protein 20 homolog 1 (219 aa).

Residues 20–60 (SLKTQRRKLGQYQQKLEKVIEAEKQAARDLIREKRKDRALL) are a coiled coil. The tract at residues 171 to 219 (PEVPTKESEESEKLDLPDVPTKTPVASNAEITPAESATKTKVLEEPLPA) is disordered. Positions 174–186 (PTKESEESEKLDL) are enriched in basic and acidic residues. The span at 194 to 209 (PVASNAEITPAESATK) shows a compositional bias: polar residues.

It belongs to the SNF7 family. Component of the endosomal sorting required for transport complex III (ESCRT-III), composed at least of VPS2, VPS20, VPS24 and VPS32. Interacts with SKD1.

Its subcellular location is the endosome. In terms of biological role, component of the ESCRT-III complex, which is required for multivesicular bodies (MVBs) formation and sorting of endosomal cargo proteins into MVBs. The ESCRT-III complex is probably involved in the concentration of MVB cargo. In Arabidopsis thaliana (Mouse-ear cress), this protein is Vacuolar protein sorting-associated protein 20 homolog 1 (VPS20.1).